Here is a 691-residue protein sequence, read N- to C-terminus: Probable serine/threonine-protein kinase pXi (691 aa).

The Protein kinase domain maps to 18–263 (YEIGSQIGNG…IDQTLKHPWI (246 aa)). Residues 24–32 (IGNGKFAQV) and lysine 47 each bind ATP. Aspartate 137 (proton acceptor) is an active-site residue. 4 disordered regions span residues 314–350 (TPIK…ENEN), 420–447 (ENDS…KFTS), 510–536 (QHNN…GNGT), and 600–620 (GGSG…KKDK). A compositionally biased stretch (low complexity) spans 322–336 (NNNNNNNNNNNNNNN). The segment covering 338–350 (ILDKKSNENENEN) has biased composition (basic and acidic residues). Composition is skewed to low complexity over residues 423–433 (SSSSETYSSSS), 512–536 (NNNI…GNGT), and 600–615 (GGSG…TGGS). Residues 642 to 691 (PKETMDKLASVLSNYKQKNQEKSLKVKYEKQKDKYKKLKSQLKKDKSLLK) adopt a coiled-coil conformation.

The protein belongs to the protein kinase superfamily. CAMK Ser/Thr protein kinase family.

It carries out the reaction L-seryl-[protein] + ATP = O-phospho-L-seryl-[protein] + ADP + H(+). The enzyme catalyses L-threonyl-[protein] + ATP = O-phospho-L-threonyl-[protein] + ADP + H(+). The chain is Probable serine/threonine-protein kinase pXi (pXi) from Dictyostelium discoideum (Social amoeba).